Here is a 269-residue protein sequence, read N- to C-terminus: MSDLPGIVVTGASGRMGQMLMKTVLASGKARLVGAVERPGSDWVGRDAGAAMGGAAVGVTVTDDPLAAFAQAQAVIDFTAPEATVQFAELAAQARAVHVIGTTGLEPAHLERLAWAAHHAVIVRAGNMSLGVNLLTRLTQKVAEALDEDWDIEVVEAHHRMKVDAPSGTALMLGEAAARGRGVDLAQARVSGRDGITGPRAPGSIGFSAIRGGDIVGEHDVIFAAAGERITLRHVATDRAIFARGALKAALWGQDRRPGQYDMMDVLGL.

NAD(+) is bound by residues 11–16 and glutamate 37; that span reads GASGRM. Arginine 38 contributes to the NADP(+) binding site. Residues 101-103 and 125-128 contribute to the NAD(+) site; these read GTT and AGNM. The active-site Proton donor/acceptor is histidine 158. A (S)-2,3,4,5-tetrahydrodipicolinate-binding site is contributed by histidine 159. Lysine 162 (proton donor) is an active-site residue. Residue 168-169 coordinates (S)-2,3,4,5-tetrahydrodipicolinate; it reads GT.

It belongs to the DapB family.

It localises to the cytoplasm. The catalysed reaction is (S)-2,3,4,5-tetrahydrodipicolinate + NAD(+) + H2O = (2S,4S)-4-hydroxy-2,3,4,5-tetrahydrodipicolinate + NADH + H(+). It carries out the reaction (S)-2,3,4,5-tetrahydrodipicolinate + NADP(+) + H2O = (2S,4S)-4-hydroxy-2,3,4,5-tetrahydrodipicolinate + NADPH + H(+). It participates in amino-acid biosynthesis; L-lysine biosynthesis via DAP pathway; (S)-tetrahydrodipicolinate from L-aspartate: step 4/4. Functionally, catalyzes the conversion of 4-hydroxy-tetrahydrodipicolinate (HTPA) to tetrahydrodipicolinate. In Cereibacter sphaeroides (strain ATCC 17023 / DSM 158 / JCM 6121 / CCUG 31486 / LMG 2827 / NBRC 12203 / NCIMB 8253 / ATH 2.4.1.) (Rhodobacter sphaeroides), this protein is 4-hydroxy-tetrahydrodipicolinate reductase.